The primary structure comprises 354 residues: Ferredoxin--NADP reductase (354 aa).

7 residues coordinate FAD: Asp-42, Gln-50, Tyr-55, Ile-95, Phe-130, Asp-299, and Thr-339.

Belongs to the ferredoxin--NADP reductase type 2 family. As to quaternary structure, homodimer. It depends on FAD as a cofactor.

The enzyme catalyses 2 reduced [2Fe-2S]-[ferredoxin] + NADP(+) + H(+) = 2 oxidized [2Fe-2S]-[ferredoxin] + NADPH. This is Ferredoxin--NADP reductase from Acidovorax sp. (strain JS42).